Reading from the N-terminus, the 293-residue chain is Ribosomal RNA small subunit methyltransferase H (293 aa).

S-adenosyl-L-methionine-binding positions include 32–34, Asp-51, Phe-78, Asp-99, and Gln-106; that span reads GGH. Positions 272-293 are disordered; sequence SDEEIKENPASRSAKLRVGRRI.

This sequence belongs to the methyltransferase superfamily. RsmH family.

It localises to the cytoplasm. It catalyses the reaction cytidine(1402) in 16S rRNA + S-adenosyl-L-methionine = N(4)-methylcytidine(1402) in 16S rRNA + S-adenosyl-L-homocysteine + H(+). Specifically methylates the N4 position of cytidine in position 1402 (C1402) of 16S rRNA. The protein is Ribosomal RNA small subunit methyltransferase H of Sulfurihydrogenibium sp. (strain YO3AOP1).